Here is a 111-residue protein sequence, read N- to C-terminus: Large ribosomal subunit protein uL23 (111 aa).

This sequence belongs to the universal ribosomal protein uL23 family. As to quaternary structure, part of the 50S ribosomal subunit. Contacts protein L29, and trigger factor when it is bound to the ribosome.

One of the early assembly proteins it binds 23S rRNA. One of the proteins that surrounds the polypeptide exit tunnel on the outside of the ribosome. Forms the main docking site for trigger factor binding to the ribosome. This Nitrosomonas eutropha (strain DSM 101675 / C91 / Nm57) protein is Large ribosomal subunit protein uL23.